We begin with the raw amino-acid sequence, 441 residues long: Xaa-Pro dipeptidase (441 aa).

Positions 244, 255, 336, 381, and 420 each coordinate Mn(2+).

Belongs to the peptidase M24B family. Bacterial-type prolidase subfamily. Mn(2+) serves as cofactor.

It carries out the reaction Xaa-L-Pro dipeptide + H2O = an L-alpha-amino acid + L-proline. Splits dipeptides with a prolyl residue in the C-terminal position. The protein is Xaa-Pro dipeptidase of Xanthomonas euvesicatoria pv. vesicatoria (strain 85-10) (Xanthomonas campestris pv. vesicatoria).